Reading from the N-terminus, the 289-residue chain is Protease HtpX homolog (289 aa).

The next 2 membrane-spanning stretches (helical) occupy residues 5–27 (LWVRTGLLMAFLTGLLVGIGYLI) and 40–60 (ALFMNFFSYWFSDSIVLSWYN). H133 is a binding site for Zn(2+). E134 is an active-site residue. H137 serves as a coordination point for Zn(2+). Helical transmembrane passes span 143-163 (TLIQTIAAVLAGAIMVLVNFA) and 181-201 (IVALILAIILAPIAATLIQLA). E207 contributes to the Zn(2+) binding site.

The protein belongs to the peptidase M48B family. Zn(2+) serves as cofactor.

Its subcellular location is the cell membrane. The sequence is that of Protease HtpX homolog from Pyrococcus furiosus (strain ATCC 43587 / DSM 3638 / JCM 8422 / Vc1).